The primary structure comprises 335 residues: Galactosylgalactosylxylosylprotein 3-beta-glucuronosyltransferase 3 (335 aa).

Topologically, residues M1–N7 are cytoplasmic. Residues V8 to G28 form a helical; Signal-anchor for type II membrane protein membrane-spanning segment. The Lumenal portion of the chain corresponds to Q29–V335. UDP-alpha-D-glucuronate contacts are provided by residues P82–Y84, D113, R156, R161, and D194–D196. D196 provides a ligand contact to Mn(2+). Residues W243–D252 are interaction with galactose moiety of substrate glycoprotein. E281 (proton donor/acceptor) is an active-site residue. N-linked (GlcNAc...) asparagine glycosylation occurs at N300. Residue H308–R310 participates in UDP-alpha-D-glucuronate binding. Positions E312–L322 are enriched in basic and acidic residues. A disordered region spans residues E312–V335.

The protein belongs to the glycosyltransferase 43 family. In terms of assembly, homodimer; disulfide-linked. Interacts with PXYLP1; the interaction increases the 2-phosphoxylose phosphatase activity of PXYLP1 during completion of linkage region formation in a B3GAT3-mediated manner. It depends on Mn(2+) as a cofactor. N-glycosylated. As to expression, expressed in heart, aorta, bone, and also in osteoblasts.

The protein localises to the golgi apparatus membrane. It localises to the golgi apparatus. Its subcellular location is the cis-Golgi network. It catalyses the reaction 3-O-(beta-D-galactosyl-(1-&gt;3)-beta-D-galactosyl-(1-&gt;4)-beta-D-xylosyl)-L-seryl-[protein] + UDP-alpha-D-glucuronate = 3-O-(beta-D-GlcA-(1-&gt;3)-beta-D-Gal-(1-&gt;3)-beta-D-Gal-(1-&gt;4)-beta-D-Xyl)-L-seryl-[protein] + UDP + H(+). It functions in the pathway protein modification; protein glycosylation. Its function is as follows. Glycosaminoglycans biosynthesis. Involved in forming the linkage tetrasaccharide present in heparan sulfate and chondroitin sulfate. Transfers a glucuronic acid moiety from the uridine diphosphate-glucuronic acid (UDP-GlcUA) to the common linkage region trisaccharide Gal-beta-1,3-Gal-beta-1,4-Xyl covalently bound to a Ser residue at the glycosaminylglycan attachment site of proteoglycans. Can also play a role in the biosynthesis of l2/HNK-1 carbohydrate epitope on glycoproteins. Stimulates 2-phosphoxylose phosphatase activity of PXYLP1 in presence of uridine diphosphate-glucuronic acid (UDP-GlcUA) during completion of linkage region formation. This Mus musculus (Mouse) protein is Galactosylgalactosylxylosylprotein 3-beta-glucuronosyltransferase 3 (B3gat3).